Reading from the N-terminus, the 149-residue chain is UPF0260 protein RCAP_rcc02083 (149 aa).

It belongs to the UPF0260 family.

The polypeptide is UPF0260 protein RCAP_rcc02083 (Rhodobacter capsulatus (strain ATCC BAA-309 / NBRC 16581 / SB1003)).